The primary structure comprises 21 residues: Basic phospholipase A2 BjIV (21 aa).

The protein belongs to the phospholipase A2 family. Group II subfamily. Can form dimers, trimers and tetramers. Ca(2+) is required as a cofactor. Contains seven disulfide bonds. In terms of tissue distribution, expressed by the venom gland.

The protein resides in the secreted. It carries out the reaction a 1,2-diacyl-sn-glycero-3-phosphocholine + H2O = a 1-acyl-sn-glycero-3-phosphocholine + a fatty acid + H(+). Its activity is regulated as follows. Inhibited by crotapotin. Snake venom phospholipase A2 has a high enzymatic activity and produces moderate myonecrosis in skeletal muscle, but shows no neuromuscular activity in mouse phrenic nerve-diaphragm preparations. PLA2 catalyzes the calcium-dependent hydrolysis of the 2-acyl groups in 3-sn-phosphoglycerides. The polypeptide is Basic phospholipase A2 BjIV (Bothrops jararacussu (Jararacussu)).